The chain runs to 3106 residues: Probable polyketide synthase 29 (3106 aa).

The segment covering 1–11 (MVQNTDNTRNS) has biased composition (polar residues). The tract at residues 1–20 (MVQNTDNTRNSKLIRDRNDY) is disordered. The 434-residue stretch at 28 to 461 (SGDIAVIGIG…GSNVCLILSE (434 aa)) folds into the Ketosynthase family 3 (KS3) domain. Residues C200, H339, and H384 each act as for beta-ketoacyl synthase activity in the active site. Residues 661–694 (GVSADIIIGHSLGEVSSPYCSGMIDFQTLCYLTY) are acyl/malonyl transferase. S671 acts as the For acyl/malonyl transferase activity in catalysis. The interval 961-1082 (PSIHGLGNNT…GNFSLTKHNS (122 aa)) is N-terminal hotdog fold. The PKS/mFAS DH domain maps to 961-1266 (PSIHGLGNNT…CALVSLDSNP (306 aa)). The Proton acceptor; for dehydratase activity role is filled by H994. The C-terminal hotdog fold stretch occupies residues 1099–1266 (NFTSISKQDF…CALVSLDSNP (168 aa)). D1171 (proton donor; for dehydratase activity) is an active-site residue. The region spanning 2533–2610 (NNNEIIRSTI…QSIEIILSAH (78 aa)) is the Carrier domain. S2570 is subject to O-(pantetheine 4'-phosphoryl)serine. Residues 2609–2656 (AHNNNNKNNNNNNNINNNNKNNNNNNNKNNNNINNNINNNKNNNNNNN) are a coiled coil. A disordered region spans residues 2614 to 2656 (NKNNNNNNNINNNNKNNNNNNNKNNNNINNNINNNKNNNNNNN).

Requires pantetheine 4'-phosphate as cofactor.

In terms of biological role, probable polyketide synthase. The chain is Probable polyketide synthase 29 (pks29) from Dictyostelium discoideum (Social amoeba).